Consider the following 338-residue polypeptide: Starch-binding domain-containing protein 1 (338 aa).

Residues 1 to 6 are Extracellular-facing; that stretch reads MGAVWS. The helical transmembrane segment at 7–23 threads the bilayer; the sequence is ALLVGGGLAGALILWLL. Residues 24–338 lie on the Cytoplasmic side of the membrane; it reads RGDSGAPGKD…KVVHGWWGIH (315 aa). Disordered regions lie at residues 30 to 73 and 120 to 148; these read PGKD…RELV and KIPD…WRLP. The segment covering 36 to 52 has biased composition (low complexity); the sequence is AEPPQKGAPPGEAAAPG. Over residues 53–62 the composition is skewed to gly residues; that stretch reads DGPGGGGSGG. Serine 68 carries the phosphoserine modification. A compositionally biased stretch (basic and acidic residues) spans 122–132; that stretch reads PDTHSRADSEA. A phosphoserine mark is found at serine 140, serine 167, and serine 179. Positions 185-191 match the LIR motif; it reads HEDWEVV. 7 positions are modified to phosphoserine: serine 195, serine 196, serine 205, serine 209, serine 212, serine 220, and serine 223. Residues 238–337 form the CBM20 domain; sequence SLKPQQVSIQ…DKVVHGWWGI (100 aa).

As to quaternary structure, interacts with the ATG8 family proteins GABARAP and GABARAPL1. Interacts with several glycogen-associated proteins, such as GYS2 (liver glycogen synthase), GDE (glycogen debranching enzyme), GBE1 (glycogen branching enzyme 1) and EPM2A (Laforin). Ubiquitinated, which leads to proteasomal degradation. Expressed at high level in glycogen-accumulating organs such as muscle and liver. Trace signals are also found in brain, kidney, and pancreas.

The protein resides in the preautophagosomal structure membrane. It is found in the endoplasmic reticulum membrane. It localises to the cell membrane. Its subcellular location is the sarcolemma. The protein localises to the T-tubule. Its function is as follows. Acts as a cargo receptor for glycogen. Delivers its cargo to an autophagic pathway called glycophagy, resulting in the transport of glycogen to lysosomes. This Mus musculus (Mouse) protein is Starch-binding domain-containing protein 1.